A 499-amino-acid polypeptide reads, in one-letter code: Bifunctional purine biosynthesis protein PurH (499 aa).

Residues 1-144 enclose the MGS-like domain; it reads MIKRALISVF…KNFKDVVVLT (144 aa).

It belongs to the PurH family.

It carries out the reaction (6R)-10-formyltetrahydrofolate + 5-amino-1-(5-phospho-beta-D-ribosyl)imidazole-4-carboxamide = 5-formamido-1-(5-phospho-D-ribosyl)imidazole-4-carboxamide + (6S)-5,6,7,8-tetrahydrofolate. It catalyses the reaction IMP + H2O = 5-formamido-1-(5-phospho-D-ribosyl)imidazole-4-carboxamide. Its pathway is purine metabolism; IMP biosynthesis via de novo pathway; 5-formamido-1-(5-phospho-D-ribosyl)imidazole-4-carboxamide from 5-amino-1-(5-phospho-D-ribosyl)imidazole-4-carboxamide (10-formyl THF route): step 1/1. The protein operates within purine metabolism; IMP biosynthesis via de novo pathway; IMP from 5-formamido-1-(5-phospho-D-ribosyl)imidazole-4-carboxamide: step 1/1. The chain is Bifunctional purine biosynthesis protein PurH from Clostridium botulinum (strain Loch Maree / Type A3).